Consider the following 813-residue polypeptide: DNA gyrase subunit A (813 aa).

The Topo IIA-type catalytic domain occupies 38–504 (LPDVRDGLKP…EIEYLDVEDF (467 aa)). The active-site O-(5'-phospho-DNA)-tyrosine intermediate is Tyr126. Residues 531-537 (QNRGGKG) carry the GyrA-box motif.

This sequence belongs to the type II topoisomerase GyrA/ParC subunit family. As to quaternary structure, heterotetramer, composed of two GyrA and two GyrB chains. In the heterotetramer, GyrA contains the active site tyrosine that forms a transient covalent intermediate with DNA, while GyrB binds cofactors and catalyzes ATP hydrolysis.

The protein localises to the cytoplasm. It carries out the reaction ATP-dependent breakage, passage and rejoining of double-stranded DNA.. A type II topoisomerase that negatively supercoils closed circular double-stranded (ds) DNA in an ATP-dependent manner to modulate DNA topology and maintain chromosomes in an underwound state. Negative supercoiling favors strand separation, and DNA replication, transcription, recombination and repair, all of which involve strand separation. Also able to catalyze the interconversion of other topological isomers of dsDNA rings, including catenanes and knotted rings. Type II topoisomerases break and join 2 DNA strands simultaneously in an ATP-dependent manner. The sequence is that of DNA gyrase subunit A from Treponema pallidum (strain Nichols).